Consider the following 250-residue polypeptide: 5-oxoprolinase subunit A (250 aa).

Belongs to the LamB/PxpA family. In terms of assembly, forms a complex composed of PxpA, PxpB and PxpC.

The enzyme catalyses 5-oxo-L-proline + ATP + 2 H2O = L-glutamate + ADP + phosphate + H(+). Catalyzes the cleavage of 5-oxoproline to form L-glutamate coupled to the hydrolysis of ATP to ADP and inorganic phosphate. This Paraburkholderia phymatum (strain DSM 17167 / CIP 108236 / LMG 21445 / STM815) (Burkholderia phymatum) protein is 5-oxoprolinase subunit A.